The following is a 478-amino-acid chain: Sphingomyelin synthase-related protein 1 (478 aa).

A compositionally biased stretch (low complexity) spans 1–22; sequence MPAGSRAGSRLRSGSLPRPSRL. Residues 1-65 are disordered; the sequence is MPAGSRAGSR…TAEEVEKEMA (65 aa). The 67-residue stretch at 75–141 folds into the SAM domain; the sequence is WTTKHVAVWL…MLSVRKLQKI (67 aa). 6 helical membrane-spanning segments follow: residues 216–236, 264–284, 295–315, 341–361, 385–405, and 410–430; these read ILSCVYVFIVFGFTSFIMVIV, FSMTEVCGVILCYIWILVLLL, LCSLMGTVFLLRCFTMFVTSL, AIWSGFGMTLTGVHTCGDYMF, FLHTLSWVLNLFGIFFILAAH, and IDVFIAFYITTRLFLYYHTLA. At 431–478 the chain is on the cytoplasmic side; that stretch reads NTRAYHQSRRARIWFPMFSFFECNVNGTVPNEYCWPFSKPAIMKRLIG.

The protein belongs to the sphingomyelin synthase family. In terms of tissue distribution, expressed ubiquitously with highest levels in macrophages and testis.

The protein resides in the endoplasmic reticulum membrane. The enzyme catalyses an N-acylsphing-4-enine + a 1,2-diacyl-sn-glycero-3-phosphoethanolamine = an N-acylsphing-4-enine 1-phosphoethanolamine + a 1,2-diacyl-sn-glycerol. It carries out the reaction an N-acylsphinganine + a 1,2-diacyl-sn-glycero-3-phosphoethanolamine = an N-acylsphinganine-1-phosphoethanolamine + a 1,2-diacyl-sn-glycerol. The catalysed reaction is an N-acyl-(4R)-4-hydroxysphinganine + a 1,2-diacyl-sn-glycero-3-phosphoethanolamine = an N-acyl-(4R)-4-hydroxysphinganine-1-phosphoethanolamine + a 1,2-diacyl-sn-glycerol. It catalyses the reaction N-hexadecanoylsphinganine + a 1,2-diacyl-sn-glycero-3-phosphoethanolamine = N-hexadecanoyl-sphinganine-1-phosphoethanolamine + a 1,2-diacyl-sn-glycerol. The enzyme catalyses N-hexadecanoyl-(4R)-hydroxysphinganine + a 1,2-diacyl-sn-glycero-3-phosphoethanolamine = N-hexadecanoyl-(4R)-hydroxysphinganine-1-phosphoethanolamine + a 1,2-diacyl-sn-glycerol. It participates in sphingolipid metabolism. Functionally, synthesizes sphingolipids through transfer of a phosphatidyl head group from a glycerophospholipid on to the primary hydroxyl of a ceramide in the lumen of the endoplasmic reticulum. Catalyzes the synthesis of ceramide phosphoethanolamines (CPEs) (such as N-acylsphing-4-enine 1-phosphoethanolamine) by transferring phosphoethanolamine head group, which is smaller and more hydrophilic than the phosphocholine (PC) headgroup transferred in the canonical sphingomyelin synthesis (SMS) reaction by SMS1 or SMS2, from a phosphatidylethanolamine (1,2-diacyl-sn-glycero-3-phosphoethanolamine, PE) to a ceramide (such as N-acylsphing-4-enine). The larger PC prevents an efficient fit in the enzyme's catalytic pocket, leading to little or no SMS activity. In vitro, in the absence of ceramide, it has PLC activity with preference for phosphatidylinositol and phosphatidic acid, but also hydrolyzes phosphatidylethanolamine. The polypeptide is Sphingomyelin synthase-related protein 1 (Mus musculus (Mouse)).